A 474-amino-acid polypeptide reads, in one-letter code: ATP synthase subunit beta (474 aa).

Gly-158–Thr-165 serves as a coordination point for ATP.

This sequence belongs to the ATPase alpha/beta chains family. As to quaternary structure, F-type ATPases have 2 components, CF(1) - the catalytic core - and CF(0) - the membrane proton channel. CF(1) has five subunits: alpha(3), beta(3), gamma(1), delta(1), epsilon(1). CF(0) has three main subunits: a(1), b(2) and c(9-12). The alpha and beta chains form an alternating ring which encloses part of the gamma chain. CF(1) is attached to CF(0) by a central stalk formed by the gamma and epsilon chains, while a peripheral stalk is formed by the delta and b chains.

The protein resides in the cell membrane. It catalyses the reaction ATP + H2O + 4 H(+)(in) = ADP + phosphate + 5 H(+)(out). In terms of biological role, produces ATP from ADP in the presence of a proton gradient across the membrane. The catalytic sites are hosted primarily by the beta subunits. This is ATP synthase subunit beta from Tropheryma whipplei (strain Twist) (Whipple's bacillus).